The primary structure comprises 73 residues: Putative membrane protein insertion efficiency factor (73 aa).

Belongs to the UPF0161 family.

The protein localises to the cell inner membrane. In terms of biological role, could be involved in insertion of integral membrane proteins into the membrane. The protein is Putative membrane protein insertion efficiency factor of Dinoroseobacter shibae (strain DSM 16493 / NCIMB 14021 / DFL 12).